Consider the following 95-residue polypeptide: Co-chaperonin GroES (95 aa).

The protein belongs to the GroES chaperonin family. As to quaternary structure, heptamer of 7 subunits arranged in a ring. Interacts with the chaperonin GroEL.

It localises to the cytoplasm. Its function is as follows. Together with the chaperonin GroEL, plays an essential role in assisting protein folding. The GroEL-GroES system forms a nano-cage that allows encapsulation of the non-native substrate proteins and provides a physical environment optimized to promote and accelerate protein folding. GroES binds to the apical surface of the GroEL ring, thereby capping the opening of the GroEL channel. In Cereibacter sphaeroides (strain KD131 / KCTC 12085) (Rhodobacter sphaeroides), this protein is Co-chaperonin GroES.